The sequence spans 344 residues: Signal peptide peptidase (344 aa).

The Lumenal portion of the chain corresponds to M1–A11. A helical transmembrane segment spans residues L12 to L32. Residues T33–R62 are Cytoplasmic-facing. A helical membrane pass occupies residues F63 to K83. The Lumenal portion of the chain corresponds to D84–V89. The chain crosses the membrane as a helical span at residues L90 to I110. Residues R111–E136 lie on the Cytoplasmic side of the membrane. The chain crosses the membrane as a helical span at residues F137 to W157. Residues K158–H160 lie on the Lumenal side of the membrane. The chain crosses the membrane as a helical span at residues W161 to L181. At G182–A188 the chain is on the cytoplasmic side. Residues I189–V209 traverse the membrane as a helical segment. Residue D198 is part of the active site. At S210 to R230 the chain is on the lumenal side. The chain crosses the membrane as a helical span at residues P231–L251. D239 is a catalytic residue. At R252–Y263 the chain is on the cytoplasmic side. A helical transmembrane segment spans residues F264–W284. The Lumenal segment spans residues F285–P290. The PAL motif lies at P290 to L292. A helical membrane pass occupies residues A291–G311. The Cytoplasmic segment spans residues D312 to E344. The tract at residues K323 to E344 is disordered.

It belongs to the peptidase A22B family. As to expression, ubiquitous with the highest expression in emerging leaves, roots, and floral tissues (at the protein level). Highly detected in pollen.

Its subcellular location is the endoplasmic reticulum membrane. Intramembrane-cleaving aspartic protease (I-CLiP) that cleaves type II membrane signal peptides in the hydrophobic plane of the membrane. Catalyzes intramembrane proteolysis of some signal peptides after they have been cleaved from a preprotein, resulting in the release of the fragment from the ER membrane into the cytoplasm. Plays a critical role in the development and function of the reproductive tissues, especially in pollen development. The chain is Signal peptide peptidase (SPP) from Arabidopsis thaliana (Mouse-ear cress).